A 471-amino-acid chain; its full sequence is Siroheme synthase 1 (471 aa).

The interval 1–203 (MDYLPLFAEL…GNSAEAEKAL (203 aa)) is precorrin-2 dehydrogenase /sirohydrochlorin ferrochelatase. Residues 22-23 (EI) and 43-44 (ET) contribute to the NAD(+) site. Ser-128 is modified (phosphoserine). A uroporphyrinogen-III C-methyltransferase region spans residues 215 to 471 (GEIILVGAGP…GFNASVVNLA (257 aa)). An S-adenosyl-L-methionine-binding site is contributed by Pro-224. The active-site Proton acceptor is the Asp-247. The active-site Proton donor is Lys-269. Residues 300–302 (GGD), Ile-305, 330–331 (TA), Met-382, and Gly-411 each bind S-adenosyl-L-methionine.

The protein in the N-terminal section; belongs to the precorrin-2 dehydrogenase / sirohydrochlorin ferrochelatase family. In the C-terminal section; belongs to the precorrin methyltransferase family.

It carries out the reaction uroporphyrinogen III + 2 S-adenosyl-L-methionine = precorrin-2 + 2 S-adenosyl-L-homocysteine + H(+). The catalysed reaction is precorrin-2 + NAD(+) = sirohydrochlorin + NADH + 2 H(+). It catalyses the reaction siroheme + 2 H(+) = sirohydrochlorin + Fe(2+). Its pathway is cofactor biosynthesis; adenosylcobalamin biosynthesis; precorrin-2 from uroporphyrinogen III: step 1/1. It functions in the pathway cofactor biosynthesis; adenosylcobalamin biosynthesis; sirohydrochlorin from precorrin-2: step 1/1. The protein operates within porphyrin-containing compound metabolism; siroheme biosynthesis; precorrin-2 from uroporphyrinogen III: step 1/1. It participates in porphyrin-containing compound metabolism; siroheme biosynthesis; siroheme from sirohydrochlorin: step 1/1. Its pathway is porphyrin-containing compound metabolism; siroheme biosynthesis; sirohydrochlorin from precorrin-2: step 1/1. Its function is as follows. Multifunctional enzyme that catalyzes the SAM-dependent methylations of uroporphyrinogen III at position C-2 and C-7 to form precorrin-2 via precorrin-1. Then it catalyzes the NAD-dependent ring dehydrogenation of precorrin-2 to yield sirohydrochlorin. Finally, it catalyzes the ferrochelation of sirohydrochlorin to yield siroheme. The chain is Siroheme synthase 1 from Klebsiella pneumoniae subsp. pneumoniae (strain ATCC 700721 / MGH 78578).